Reading from the N-terminus, the 150-residue chain is Globin-3 (150 aa).

The Globin domain maps to 11–150; it reads PLSAAEKTKI…MICILLRSAY (140 aa). Heme b contacts are provided by His-74 and His-106.

It belongs to the globin family. In terms of assembly, monomer.

The protein is Globin-3 of Petromyzon marinus (Sea lamprey).